The primary structure comprises 312 residues: Glyoxylate/hydroxypyruvate reductase A (312 aa).

Residue Arg227 is part of the active site. His275 acts as the Proton donor in catalysis.

Belongs to the D-isomer specific 2-hydroxyacid dehydrogenase family. GhrA subfamily.

Its subcellular location is the cytoplasm. The enzyme catalyses glycolate + NADP(+) = glyoxylate + NADPH + H(+). It catalyses the reaction (R)-glycerate + NAD(+) = 3-hydroxypyruvate + NADH + H(+). The catalysed reaction is (R)-glycerate + NADP(+) = 3-hydroxypyruvate + NADPH + H(+). Functionally, catalyzes the NADPH-dependent reduction of glyoxylate and hydroxypyruvate into glycolate and glycerate, respectively. The polypeptide is Glyoxylate/hydroxypyruvate reductase A (Escherichia coli O7:K1 (strain IAI39 / ExPEC)).